Reading from the N-terminus, the 66-residue chain is Small ribosomal subunit protein eS27 (66 aa).

The Zn(2+) site is built by cysteine 21, cysteine 24, cysteine 40, and cysteine 43. The segment at 21 to 43 adopts a C4-type zinc-finger fold; sequence CPVCGNEQVIFSHATFPARCLVC.

It belongs to the eukaryotic ribosomal protein eS27 family. As to quaternary structure, part of the 30S ribosomal subunit. Zn(2+) is required as a cofactor.

In Hyperthermus butylicus (strain DSM 5456 / JCM 9403 / PLM1-5), this protein is Small ribosomal subunit protein eS27.